The chain runs to 307 residues: UDP-N-acetylenolpyruvoylglucosamine reductase (307 aa).

Residues 34–199 (RVGGPAQVLF…TAVRFRGTPS (166 aa)) enclose the FAD-binding PCMH-type domain. Residue arginine 179 is part of the active site. The active-site Proton donor is serine 228. Residue glutamate 298 is part of the active site.

Belongs to the MurB family. Requires FAD as cofactor.

The protein resides in the cytoplasm. It carries out the reaction UDP-N-acetyl-alpha-D-muramate + NADP(+) = UDP-N-acetyl-3-O-(1-carboxyvinyl)-alpha-D-glucosamine + NADPH + H(+). The protein operates within cell wall biogenesis; peptidoglycan biosynthesis. In terms of biological role, cell wall formation. This is UDP-N-acetylenolpyruvoylglucosamine reductase from Bradyrhizobium sp. (strain ORS 278).